A 229-amino-acid polypeptide reads, in one-letter code: DNA polymerase III subunit epsilon (229 aa).

Residues Asp10 and Glu12 each contribute to the a divalent metal cation site. 4 residues coordinate substrate: Asp10, Glu12, Glu55, and His60. The Proton acceptor role is filled by His156. An a divalent metal cation-binding site is contributed by Asp161. Asp161 contributes to the substrate binding site.

As to quaternary structure, DNA polymerase III contains a core (composed of alpha, epsilon and theta chains) that associates with a tau subunit. This core dimerizes to form the POLIII' complex. PolIII' associates with the gamma complex (composed of gamma, delta, delta', psi and chi chains) and with the beta chain to form the complete DNA polymerase III complex. Mg(2+) serves as cofactor. Mn(2+) is required as a cofactor.

It carries out the reaction DNA(n) + a 2'-deoxyribonucleoside 5'-triphosphate = DNA(n+1) + diphosphate. Functionally, DNA polymerase III is a complex, multichain enzyme responsible for most of the replicative synthesis in bacteria. The epsilon subunit contain the editing function and is a proofreading 3'-5' exonuclease. The protein is DNA polymerase III subunit epsilon (dnaQ) of Rickettsia typhi (strain ATCC VR-144 / Wilmington).